Here is a 307-residue protein sequence, read N- to C-terminus: UDP-N-acetylenolpyruvoylglucosamine reductase (307 aa).

The 166-residue stretch at 33–198 (KVGGPADIFV…LNATFALQKG (166 aa)) folds into the FAD-binding PCMH-type domain. Arginine 177 is an active-site residue. Serine 227 acts as the Proton donor in catalysis. Residue glutamate 297 is part of the active site.

It belongs to the MurB family. FAD is required as a cofactor.

The protein localises to the cytoplasm. It carries out the reaction UDP-N-acetyl-alpha-D-muramate + NADP(+) = UDP-N-acetyl-3-O-(1-carboxyvinyl)-alpha-D-glucosamine + NADPH + H(+). It functions in the pathway cell wall biogenesis; peptidoglycan biosynthesis. Cell wall formation. The chain is UDP-N-acetylenolpyruvoylglucosamine reductase from Clostridium novyi (strain NT).